The primary structure comprises 1039 residues: L-arabinokinase (1039 aa).

A helical membrane pass occupies residues 662-678 (AAYVAGTILVLMIELGV). Residue 693-703 (PEGKGVSSSAA) coordinates ATP. The Proton acceptor role is filled by aspartate 745.

Belongs to the GHMP kinase family.

It is found in the membrane. The enzyme catalyses L-arabinose + ATP = beta-L-arabinose 1-phosphate + ADP + H(+). In terms of biological role, arabinose kinase. Involved in the salvage pathway which converts free L-arabinose to UDP-L-arabinose. May play a role in arabinose transport. The polypeptide is L-arabinokinase (ARA1) (Arabidopsis thaliana (Mouse-ear cress)).